We begin with the raw amino-acid sequence, 1083 residues long: Carbamoyl phosphate synthase large chain (1083 aa).

The carboxyphosphate synthetic domain stretch occupies residues 1–402 (MPRRDDIKKI…SFQKALRGLE (402 aa)). ATP-binding residues include Arg129, Arg169, Gly175, Gly176, Glu208, Ile210, Glu215, Gly241, Val242, His243, Gln285, and Glu299. The ATP-grasp 1 domain maps to 133-328 (KQAMDKIGLD…IAKIAAKLAV (196 aa)). Mg(2+) contacts are provided by Gln285, Glu299, and Asn301. Residues Gln285, Glu299, and Asn301 each coordinate Mn(2+). Residues 403–557 (VGAFGFGSDP…YSTYESETEV (155 aa)) are oligomerization domain. The segment at 558 to 944 (PAKGDKKRVV…AFAKSQLAAG (387 aa)) is carbamoyl phosphate synthetic domain. An ATP-grasp 2 domain is found at 683–878 (SSLIDELGLR…VANLATKVMA (196 aa)). Residues Arg719, Arg758, Leu760, Glu765, Gly790, Val791, His792, Ser793, Gln833, and Glu849 each contribute to the ATP site. Gln833, Glu849, and Asn851 together coordinate Mg(2+). Mn(2+) contacts are provided by Gln833, Glu849, and Asn851. An MGS-like domain is found at 945 to 1083 (TVLPESGKIF…SLQRRYAQNV (139 aa)). Residues 945 to 1083 (TVLPESGKIF…SLQRRYAQNV (139 aa)) form an allosteric domain region.

The protein belongs to the CarB family. As to quaternary structure, composed of two chains; the small (or glutamine) chain promotes the hydrolysis of glutamine to ammonia, which is used by the large (or ammonia) chain to synthesize carbamoyl phosphate. Tetramer of heterodimers (alpha,beta)4. Requires Mg(2+) as cofactor. The cofactor is Mn(2+).

The catalysed reaction is hydrogencarbonate + L-glutamine + 2 ATP + H2O = carbamoyl phosphate + L-glutamate + 2 ADP + phosphate + 2 H(+). The enzyme catalyses hydrogencarbonate + NH4(+) + 2 ATP = carbamoyl phosphate + 2 ADP + phosphate + 2 H(+). It functions in the pathway amino-acid biosynthesis; L-arginine biosynthesis; carbamoyl phosphate from bicarbonate: step 1/1. It participates in pyrimidine metabolism; UMP biosynthesis via de novo pathway; (S)-dihydroorotate from bicarbonate: step 1/3. In terms of biological role, large subunit of the glutamine-dependent carbamoyl phosphate synthetase (CPSase). CPSase catalyzes the formation of carbamoyl phosphate from the ammonia moiety of glutamine, carbonate, and phosphate donated by ATP, constituting the first step of 2 biosynthetic pathways, one leading to arginine and/or urea and the other to pyrimidine nucleotides. The large subunit (synthetase) binds the substrates ammonia (free or transferred from glutamine from the small subunit), hydrogencarbonate and ATP and carries out an ATP-coupled ligase reaction, activating hydrogencarbonate by forming carboxy phosphate which reacts with ammonia to form carbamoyl phosphate. The polypeptide is Carbamoyl phosphate synthase large chain (Rhodopirellula baltica (strain DSM 10527 / NCIMB 13988 / SH1)).